Here is a 314-residue protein sequence, read N- to C-terminus: Transmembrane protein 178B (314 aa).

The first 24 residues, 1–24, serve as a signal peptide directing secretion; it reads MRLLAGAGLCLALAALALLAVALS. The tract at residues 32-83 is disordered; that stretch reads DARRHRDRCRKPGGKRNDPGYMYTPGQHLPLRGEPPSSRIRSPRGGEPGGVR. The span at 36 to 45 shows a compositional bias: basic residues; sequence HRDRCRKPGG. The next 3 membrane-spanning stretches (helical) occupy residues 194-214, 228-248, and 274-294; these read AGFIGMAVSIILFGWMVGVLG, LLFLMGGTCCIISLCTCVAGI, and MFCAWGGLGLTLLSGFLCTLA.

Belongs to the TMEM178 family.

The protein resides in the membrane. The polypeptide is Transmembrane protein 178B (tmem178b) (Xenopus tropicalis (Western clawed frog)).